A 519-amino-acid polypeptide reads, in one-letter code: Serine/threonine-protein kinase RIO3 (519 aa).

Ser8 and Ser112 each carry phosphoserine. Residues 121–159 (PYEDSDSSEDEVDWQDTRDDPYRPAKPVPTPKKGFIGKG) form a disordered region. Phosphotyrosine is present on Tyr122. Acidic residues predominate over residues 124–134 (DSDSSEDEVDW). Phosphoserine is present on residues Ser125, Ser127, and Ser128. The Protein kinase domain maps to 251 to 519 (ETITGCISTG…DGDPPLLYDE (269 aa)). ATP-binding positions include 257 to 265 (ISTGKESVV) and Lys290. Asp406 acts as the Proton acceptor in catalysis.

It belongs to the protein kinase superfamily. RIO-type Ser/Thr kinase family. Interacts with CASP10. Interacts with IRF3; RIOK3 probably mediates the interaction of TBK1 with IRF3. Associated with 40S pre-ribosomal particles. Requires Mg(2+) as cofactor. Post-translationally, autophosphorylated (in vitro). As to expression, widely expressed.

The protein resides in the cytoplasm. The enzyme catalyses L-seryl-[protein] + ATP = O-phospho-L-seryl-[protein] + ADP + H(+). It catalyses the reaction L-threonyl-[protein] + ATP = O-phospho-L-threonyl-[protein] + ADP + H(+). Involved in regulation of type I interferon (IFN)-dependent immune response which plays a critical role in the innate immune response against DNA and RNA viruses. May act as an adapter protein essential for the recruitment of TBK1 to IRF3. Phosphorylates IFIH1 on 'Ser-828' interfering with IFIH1 filament assembly on long dsRNA and resulting in attenuated IFIH1-signaling. Can inhibit CASP10 isoform 7-mediated activation of the NF-kappaB signaling pathway. May play a role in the biogenesis of the 40S ribosomal subunit. Involved in the processing of 21S pre-rRNA to the mature 18S rRNA. In Homo sapiens (Human), this protein is Serine/threonine-protein kinase RIO3 (RIOK3).